A 754-amino-acid polypeptide reads, in one-letter code: Leucine-rich repeat-containing protein 36 (754 aa).

LRR repeat units follow at residues 51–72 (NLRSLDLSRNLITSLKGIQYLC) and 73–94 (SLQDLNLYYNNIPSLVEVSRLQ). In terms of domain architecture, LRRCT spans 107–146 (NPVVRKDTDYRLFAVYTLQTLEKLDDRTVREGERKAAKLH). Positions 241–255 (REMPSDNHQEDEFRH) are enriched in basic and acidic residues. The segment at 241-270 (REMPSDNHQEDEFRHYSPRQSTVRSPEKMT) is disordered. A coiled-coil region spans residues 600–680 (NDMESLKQKL…EKTVAILHES (81 aa)). Residues 702–734 (YSGKALLPPEKGHHLGRSSPFGKSTLSSSSPVA) form a disordered region. Residues 722 to 732 (FGKSTLSSSSP) show a composition bias toward polar residues.

The protein is Leucine-rich repeat-containing protein 36 (LRRC36) of Homo sapiens (Human).